The following is a 366-amino-acid chain: NADP-dependent oxidoreductase domain-containing protein 1 (366 aa).

Belongs to the pyrroline-5-carboxylate reductase family.

Probable oxidoreductase. This Mus musculus (Mouse) protein is NADP-dependent oxidoreductase domain-containing protein 1 (Noxred1).